The primary structure comprises 54 residues: MLYYALVFFIVALIAAIFGFGGIAAGAVEIAKILFLIFLVVAIVTFVMGLVRRR.

A run of 2 helical transmembrane segments spans residues 5 to 25 (ALVF…GIAA) and 30 to 50 (IAKI…VMGL).

Belongs to the UPF0391 family.

It localises to the cell membrane. This Cupriavidus metallidurans (strain ATCC 43123 / DSM 2839 / NBRC 102507 / CH34) (Ralstonia metallidurans) protein is UPF0391 membrane protein Rmet_0093.